A 358-amino-acid polypeptide reads, in one-letter code: Electron transfer flavoprotein subunit alpha, mitochondrial (358 aa).

298-326 (LYMAFGVSGAIQHLAGMRDSKVIVAVNKD) contributes to the FAD binding site.

This sequence belongs to the ETF alpha-subunit/FixB family. As to quaternary structure, heterodimer of an alpha and a beta subunit. Requires FAD as cofactor.

The protein resides in the mitochondrion matrix. Functionally, the electron transfer flavoprotein serves as a specific electron acceptor for several dehydrogenases, including five acyl-CoA dehydrogenases, glutaryl-CoA and sarcosine dehydrogenase. It transfers the electrons to the main mitochondrial respiratory chain via ETF-ubiquinone oxidoreductase (ETF dehydrogenase). This is Electron transfer flavoprotein subunit alpha, mitochondrial (ETFA) from Oryza sativa subsp. indica (Rice).